A 482-amino-acid polypeptide reads, in one-letter code: tRNA(Ile)-lysidine synthase (482 aa).

28–33 (SGGPDS) contributes to the ATP binding site.

Belongs to the tRNA(Ile)-lysidine synthase family.

It is found in the cytoplasm. The catalysed reaction is cytidine(34) in tRNA(Ile2) + L-lysine + ATP = lysidine(34) in tRNA(Ile2) + AMP + diphosphate + H(+). Functionally, ligates lysine onto the cytidine present at position 34 of the AUA codon-specific tRNA(Ile) that contains the anticodon CAU, in an ATP-dependent manner. Cytidine is converted to lysidine, thus changing the amino acid specificity of the tRNA from methionine to isoleucine. This is tRNA(Ile)-lysidine synthase from Symbiobacterium thermophilum (strain DSM 24528 / JCM 14929 / IAM 14863 / T).